The sequence spans 4114 residues: Ferrichrome siderophore peptide synthetase (4114 aa).

4 consecutive Carrier domains span residues 797–874 (DPAT…QSSG), 1947–2021 (TDSE…IDKL), 3020–3093 (TQSE…MQSS), and 3574–3650 (QALS…SQTN). An O-(pantetheine 4'-phosphoryl)serine mark is found at S835, S1982, S3054, and S3611. The interval 4040 to 4061 (LDYSHHSQHSTHDRTPPSTPHV) is disordered. Basic and acidic residues predominate over residues 4041–4054 (DYSHHSQHSTHDRT).

Belongs to the ATP-dependent AMP-binding enzyme family. It depends on pantetheine 4'-phosphate as a cofactor.

Its pathway is siderophore biosynthesis; ferrichrome biosynthesis. Multidomain peptide synthetase involved in ferrichrome biosynthesis. This Mycosarcoma maydis (Corn smut fungus) protein is Ferrichrome siderophore peptide synthetase (SID2).